The primary structure comprises 475 residues: Aspartyl/glutamyl-tRNA(Asn/Gln) amidotransferase subunit B (475 aa).

It belongs to the GatB/GatE family. GatB subfamily. As to quaternary structure, heterotrimer of A, B and C subunits.

The enzyme catalyses L-glutamyl-tRNA(Gln) + L-glutamine + ATP + H2O = L-glutaminyl-tRNA(Gln) + L-glutamate + ADP + phosphate + H(+). It carries out the reaction L-aspartyl-tRNA(Asn) + L-glutamine + ATP + H2O = L-asparaginyl-tRNA(Asn) + L-glutamate + ADP + phosphate + 2 H(+). Allows the formation of correctly charged Asn-tRNA(Asn) or Gln-tRNA(Gln) through the transamidation of misacylated Asp-tRNA(Asn) or Glu-tRNA(Gln) in organisms which lack either or both of asparaginyl-tRNA or glutaminyl-tRNA synthetases. The reaction takes place in the presence of glutamine and ATP through an activated phospho-Asp-tRNA(Asn) or phospho-Glu-tRNA(Gln). This Chlorobaculum tepidum (strain ATCC 49652 / DSM 12025 / NBRC 103806 / TLS) (Chlorobium tepidum) protein is Aspartyl/glutamyl-tRNA(Asn/Gln) amidotransferase subunit B.